Consider the following 204-residue polypeptide: Urease accessory protein UreG (204 aa).

Position 10 to 17 (10 to 17 (GPVGAGKT)) interacts with GTP.

It belongs to the SIMIBI class G3E GTPase family. UreG subfamily. As to quaternary structure, homodimer. UreD, UreF and UreG form a complex that acts as a GTP-hydrolysis-dependent molecular chaperone, activating the urease apoprotein by helping to assemble the nickel containing metallocenter of UreC. The UreE protein probably delivers the nickel.

Its subcellular location is the cytoplasm. Its function is as follows. Facilitates the functional incorporation of the urease nickel metallocenter. This process requires GTP hydrolysis, probably effectuated by UreG. The polypeptide is Urease accessory protein UreG (Bacillus sp. (strain TB-90)).